The chain runs to 453 residues: Ethanolamine ammonia-lyase large subunit (453 aa).

Residues 160–162 (RLQ) and N193 each bind substrate. Adenosylcob(III)alamin contacts are provided by P194 and Q246. E287 contributes to the substrate binding site. S295 serves as a coordination point for adenosylcob(III)alamin. D362 provides a ligand contact to substrate. M401 contacts adenosylcob(III)alamin.

It belongs to the EutB family. In terms of assembly, the basic unit is a heterodimer which dimerizes to form tetramers. The heterotetramers trimerize; 6 large subunits form a core ring with 6 small subunits projecting outwards. It depends on adenosylcob(III)alamin as a cofactor.

The protein resides in the bacterial microcompartment. The enzyme catalyses ethanolamine = acetaldehyde + NH4(+). The protein operates within amine and polyamine degradation; ethanolamine degradation. Catalyzes the deamination of various vicinal amino-alcohols to oxo compounds. Allows this organism to utilize ethanolamine as the sole source of nitrogen and carbon in the presence of vitamin B12. The polypeptide is Ethanolamine ammonia-lyase large subunit (Escherichia coli O157:H7).